A 421-amino-acid polypeptide reads, in one-letter code: UPF0229 protein lpl2726 (421 aa).

The segment at 83-110 (IAGDRIKRPGGGGSGGAGGNASDSGEGE) is disordered. Residues 91 to 101 (PGGGGSGGAGG) are compositionally biased toward gly residues.

This sequence belongs to the UPF0229 family.

The protein is UPF0229 protein lpl2726 of Legionella pneumophila (strain Lens).